A 545-amino-acid polypeptide reads, in one-letter code: 2-oxo-Delta(3)-4,5,5-trimethylcyclopentenylacetyl-CoA monooxygenase (545 aa).

Residues Thr-20, Glu-39, 47 to 50 (TWYW), 59 to 60 (DT), Tyr-65, and Val-112 each bind FAD. 57–59 (RLD) is a binding site for NADP(+). Residues 193-199 (TGATGVQ) and 216-217 (RT) contribute to the NADP(+) site. Val-446 is an FAD binding site. Trp-501 is a binding site for NADP(+).

It belongs to the FAD-binding monooxygenase family. In terms of assembly, homodimer. The cofactor is FAD.

It catalyses the reaction [(1R)-2,2,3-trimethyl-5-oxocyclopent-3-enyl]acetyl-CoA + NADPH + O2 + H(+) = [(2R)-3,3,4-trimethyl-6-oxo-3,6-dihydro-1H-pyran-2-yl]acetyl-CoA + NADP(+) + H2O. It participates in terpene metabolism; (R)-camphor degradation. Involved in the degradation of (+)-camphor. Catalyzes the lactonization of 2-oxo-delta(3)-4,5, 5-trimethylcyclopentenylacetyl-CoA (OT-CoA), a key intermediate in the metabolism of camphor. 2-Oxocyclopentyl ethyl acetate is also a good substrate, as is 2-oxocyclohexyl ethyl acetate and methyl-substituted cyclohexanones, but free acid is a poor substrate. The protein is 2-oxo-Delta(3)-4,5,5-trimethylcyclopentenylacetyl-CoA monooxygenase (otemo) of Pseudomonas putida (Arthrobacter siderocapsulatus).